The chain runs to 303 residues: tRNA dimethylallyltransferase (303 aa).

13–20 (GPTASGKS) contacts ATP. 15-20 (TASGKS) is a substrate binding site. Interaction with substrate tRNA regions lie at residues 38–41 (DSMQ) and 162–166 (QRLLR).

It belongs to the IPP transferase family. Monomer. It depends on Mg(2+) as a cofactor.

It carries out the reaction adenosine(37) in tRNA + dimethylallyl diphosphate = N(6)-dimethylallyladenosine(37) in tRNA + diphosphate. Functionally, catalyzes the transfer of a dimethylallyl group onto the adenine at position 37 in tRNAs that read codons beginning with uridine, leading to the formation of N6-(dimethylallyl)adenosine (i(6)A). In Methylocella silvestris (strain DSM 15510 / CIP 108128 / LMG 27833 / NCIMB 13906 / BL2), this protein is tRNA dimethylallyltransferase.